We begin with the raw amino-acid sequence, 456 residues long: Taurine--pyruvate aminotransferase (456 aa).

K280 is subject to N6-(pyridoxal phosphate)lysine.

This sequence belongs to the class-III pyridoxal-phosphate-dependent aminotransferase family. Homotetramer. It depends on pyridoxal 5'-phosphate as a cofactor.

The enzyme catalyses taurine + pyruvate = sulfoacetaldehyde + L-alanine. Its pathway is organosulfur degradation; alkanesulfonate degradation. Its function is as follows. Involved in an anaerobic respiration pathway that converts the sulfonate taurine (2-aminoethanesulfonate) to ammonia, acetate and sulfide. Catalyzes the initial metabolic reaction of anaerobic taurine degradation, i.e. the transamination reaction between taurine and pyruvate leading to sulfoacetaldehyde and alanine. The polypeptide is Taurine--pyruvate aminotransferase (Bilophila wadsworthia (strain 3_1_6)).